Here is a 550-residue protein sequence, read N- to C-terminus: Arginine--tRNA ligase (550 aa).

Positions 130–140 (ANPTGPIHIGG) match the 'HIGH' region motif.

The protein belongs to the class-I aminoacyl-tRNA synthetase family. As to quaternary structure, monomer.

The protein resides in the cytoplasm. The enzyme catalyses tRNA(Arg) + L-arginine + ATP = L-arginyl-tRNA(Arg) + AMP + diphosphate. This chain is Arginine--tRNA ligase, found in Mycobacterium sp. (strain KMS).